Consider the following 296-residue polypeptide: Circadian clock oscillator protein KaiA (296 aa).

Positions 2-133 are psR domain, binds oxidized quinones; sequence ARPGLTIALL…LRQGRADGRS (132 aa). A KaiA N-terminal domain is found at 2 to 152; it reads ARPGLTIALL…KLSRRLQERL (151 aa). The tract at residues 153–161 is flexible linker; sequence GYLGVFYKR. Residues 162–270 enclose the KaiA C-terminal domain; it reads DPSRFLGSLP…CEMYRRSIPP (109 aa).

In terms of assembly, homodimer. The KaiABC complex composition changes during the circadian cycle to control KaiC phosphorylation. Complexes KaiC(6), KaiA(2-4):KaiC(6), KaiB(6):KaiC(6) and KaiC(6):KaiB(6):KaiA(12) are among the most important forms, many form cooperatively. KaiA and CikA bind to the same region of the KaiB(fs) form and therefore compete.

Functionally, key component of the KaiABC oscillator complex, which constitutes the main circadian regulator in cyanobacteria. Complex composition changes during the circadian cycle to control KaiC phosphorylation. KaiA stimulates KaiC autophosphorylation, while KaiB sequesters KaiA, leading to KaiC autodephosphorylation. KaiA binding to the KaiC CII domain during the subjective day yields KaiA(2-4):KaiC(6) complexes which stimulate KaiC autophosphorylation. Phospho-Ser-431 KaiC accumulation triggers binding of KaiB during the subjective night to form the KaiB(6):KaiC(6) complex, leading to changes in the output regulators CikA and SasA. KaiB(6):KaiC(6) formation exposes a site for KaiA binding on KaiB that sequesters KaiA from KaiC's CII domain, making the KaiC(6):KaiB(6):KaiA(12) complex resulting in KaiC autodephosphorylation. Complete dephosphorylation of KaiC leads to dissociation of KaiA(2):KaiB(1), completing 1 cycle of the Kai oscillator. In terms of biological role, binds oxidized quinones via the N-terminal PsR domain, allowing it to sense redox changes and possibly mediate clock input. The protein is Circadian clock oscillator protein KaiA of Parasynechococcus marenigrum (strain WH8102).